The sequence spans 150 residues: Large ribosomal subunit protein bL9 (150 aa).

It belongs to the bacterial ribosomal protein bL9 family.

In terms of biological role, binds to the 23S rRNA. In Pediococcus pentosaceus (strain ATCC 25745 / CCUG 21536 / LMG 10740 / 183-1w), this protein is Large ribosomal subunit protein bL9.